Here is a 365-residue protein sequence, read N- to C-terminus: Phenoloxidase-activating factor 1 (365 aa).

The N-terminal stretch at 1-23 (MKQVHFFILWFFVLNLYSIKAQA) is a signal peptide. The Clip domain occupies 24–74 (GCRTPNGENARCVPINNCKILYDSVLTSDPEVIRFLRASQCGYNGQPLVCC). 8 cysteine pairs are disulfide-bonded: C25/C73, C35/C64, C41/C74, C101/C240, C140/C156, C184/C191, C284/C301, and C311/C340. The region spanning 110–364 (ILNGDDTVPE…YRDWIEGNIR (255 aa)) is the Peptidase S1 domain. N131 carries an N-linked (GlcNAc...) asparagine glycan. The active-site Charge relay system is H155. Residues E175, N177, T180, and D183 each contribute to the Ca(2+) site. The active-site Charge relay system is D220. Catalysis depends on S315, which acts as the Charge relay system.

Belongs to the peptidase S1 family. CLIP subfamily. In the active form, heterodimer of a light chain and a heavy chain; disulfide-linked. In terms of processing, cleaved following the recognition of pathogen-derived products, probably by a lysyl endopeptidase.

Its subcellular location is the secreted. With respect to regulation, protein stability and endopeptidase activity are calcium dependent. First cleavage on prophenoloxidase PPO1 and PPO2 is not dependent on calcium; however, cleavage of PPO1 and PPO2 to their active forms is dependent on calcium and on the presence of PPAF2 and PPAF3. Cleavage of PPAF2 is inhibited by calcium. Inhibited by ethylenediaminetetraacetic acid (EDTA), p-nitrophenyl-p'-guanido-benzoate, diisopropylphosphorofluoridate (iPr2PF) and p-(Amidinophenyl)methanesulfonyl fluoride (p-APMSF). Its function is as follows. Serine endopeptidase which, by cleaving prophenoloxidase PPO1 and PPO2, is required for the activation of the prophenoloxidase cascade probably following the recognition of pathogen-derived products. The chain is Phenoloxidase-activating factor 1 from Holotrichia diomphalia (Korean black chafer).